Here is a 447-residue protein sequence, read N- to C-terminus: N-succinylarginine dihydrolase (447 aa).

Residues 19–28 (AGLSFGNEAS), N110, and 137–138 (HR) each bind substrate. The active site involves E174. R212 serves as a coordination point for substrate. Residue H248 is part of the active site. Positions 250 and 359 each coordinate substrate. C365 acts as the Nucleophile in catalysis.

The protein belongs to the succinylarginine dihydrolase family. In terms of assembly, homodimer.

It carries out the reaction N(2)-succinyl-L-arginine + 2 H2O + 2 H(+) = N(2)-succinyl-L-ornithine + 2 NH4(+) + CO2. The protein operates within amino-acid degradation; L-arginine degradation via AST pathway; L-glutamate and succinate from L-arginine: step 2/5. Functionally, catalyzes the hydrolysis of N(2)-succinylarginine into N(2)-succinylornithine, ammonia and CO(2). The polypeptide is N-succinylarginine dihydrolase (Escherichia fergusonii (strain ATCC 35469 / DSM 13698 / CCUG 18766 / IAM 14443 / JCM 21226 / LMG 7866 / NBRC 102419 / NCTC 12128 / CDC 0568-73)).